The following is a 402-amino-acid chain: Phosphoglycerate kinase (402 aa).

Residues D24–N26, R40, H63–R66, R122, and R155 each bind substrate. Residues K206, G297, E328, and G357–S360 contribute to the ATP site.

Belongs to the phosphoglycerate kinase family. As to quaternary structure, monomer.

The protein localises to the cytoplasm. It carries out the reaction (2R)-3-phosphoglycerate + ATP = (2R)-3-phospho-glyceroyl phosphate + ADP. It functions in the pathway carbohydrate degradation; glycolysis; pyruvate from D-glyceraldehyde 3-phosphate: step 2/5. The chain is Phosphoglycerate kinase from Parasynechococcus marenigrum (strain WH8102).